We begin with the raw amino-acid sequence, 137 residues long: Small ribosomal subunit protein bS6 (137 aa).

A disordered region spans residues 113–137; that stretch reads EEQREKKNFRKPFIKREEAATKENK. A compositionally biased stretch (basic and acidic residues) spans 126–137; it reads IKREEAATKENK.

It belongs to the bacterial ribosomal protein bS6 family.

In terms of biological role, binds together with bS18 to 16S ribosomal RNA. In Mycoplasma capricolum subsp. capricolum (strain California kid / ATCC 27343 / NCTC 10154), this protein is Small ribosomal subunit protein bS6.